The primary structure comprises 121 residues: ATP synthase epsilon chain (121 aa).

It belongs to the ATPase epsilon chain family. In terms of assembly, F-type ATPases have 2 components, CF(1) - the catalytic core - and CF(0) - the membrane proton channel. CF(1) has five subunits: alpha(3), beta(3), gamma(1), delta(1), epsilon(1). CF(0) has three main subunits: a, b and c.

The protein localises to the cell membrane. In terms of biological role, produces ATP from ADP in the presence of a proton gradient across the membrane. This chain is ATP synthase epsilon chain, found in Mycobacterium avium (strain 104).